Reading from the N-terminus, the 132-residue chain is HLA class I histocompatibility antigen protein P5 (132 aa).

In terms of tissue distribution, expressed in lymphoid tissues; Detected in spleen as well as in B-cell lines, NK cell lines and activated lymphocytes.

This is HLA class I histocompatibility antigen protein P5 (HCP5) from Homo sapiens (Human).